Consider the following 223-residue polypeptide: Cytotoxic T-lymphocyte protein 4 (223 aa).

Positions 1–35 (MACLGLRRYKAQLQLPSRTWPFVALLTLLFIPVFS) are cleaved as a signal peptide. One can recognise an Ig-like V-type domain in the interval 36–145 (EAIQVTQPSV…PPPYFVGMGN (110 aa)). Topologically, residues 36 to 161 (EAIQVTQPSV…IDPEPCPDSD (126 aa)) are extracellular. A homodimerization region spans residues 46 to 50 (VLASS). 2 disulfides stabilise this stretch: C58-C129 and C85-C103. N-linked (GlcNAc...) asparagine glycosylation is found at N108 and N113. Residues 134–139 (MYPPPY) are important for interaction with CD80 and CD86. Residue N145 is glycosylated (N-linked (GlcNAc...) asparagine). A homodimerization region spans residues 150 to 155 (YVIDPE). A helical membrane pass occupies residues 162–182 (FLLWILVAVSLGLFFYSFLVS). Topologically, residues 183-223 (AVSLSKMLKKRSPLTTGVYVKMPPTEPECEKQFQPYFIPIN) are cytoplasmic. At Y201 the chain carries Phosphotyrosine; by TXK and JAK2.

In terms of assembly, homodimer; disulfide-linked. Binds to CD80/B7-1 and CD86/B7.2. Interacts with ICOSLG. In terms of processing, N-glycosylation is important for dimerization. Phosphorylation at Tyr-201 prevents binding to the AP-2 adapter complex, blocks endocytosis, and leads to retention of CTLA4 on the cell surface. In terms of tissue distribution, widely expressed with highest levels in lymphoid tissues.

It localises to the cell membrane. Inhibitory receptor acting as a major negative regulator of T-cell responses. The affinity of CTLA4 for its natural B7 family ligands, CD80 and CD86, is considerably stronger than the affinity of their cognate stimulatory coreceptor CD28. This is Cytotoxic T-lymphocyte protein 4 (Ctla4) from Mus musculus (Mouse).